The sequence spans 260 residues: HTH-type transcriptional activator FapR (260 aa).

In terms of domain architecture, HTH araC/xylS-type spans Glu-154–Gly-251. 2 consecutive DNA-binding regions (H-T-H motif) follow at residues Ser-171–Cys-192 and Ile-218–Tyr-241.

Homodimer.

In terms of biological role, positive regulator of the expression of the 987P operon for the fimbrial protein in enterotoxigenic E.coli. The protein is HTH-type transcriptional activator FapR of Escherichia coli.